Here is a 214-residue protein sequence, read N- to C-terminus: Large ribosomal subunit protein uL4c (214 aa).

Positions 42 to 81 (VKQSNEKRQGSANTKTRSEVRGGGRKPWRQKGTGRARAGS) are disordered. Basic residues predominate over residues 64–75 (GGRKPWRQKGTG).

The protein belongs to the universal ribosomal protein uL4 family. Part of the 50S ribosomal subunit.

It is found in the plastid. The protein resides in the chloroplast. Probably binds the 23S rRNA. The protein is Large ribosomal subunit protein uL4c (rpl4) of Pyropia yezoensis (Susabi-nori).